A 654-amino-acid polypeptide reads, in one-letter code: Fructose-1,6-bisphosphatase class 3 (654 aa).

The interval 288-307 is disordered; sequence NPAFKPKKRPDKHERLTQRE. Positions 298–307 are enriched in basic and acidic residues; it reads DKHERLTQRE.

The protein belongs to the FBPase class 3 family. The cofactor is Mn(2+).

The catalysed reaction is beta-D-fructose 1,6-bisphosphate + H2O = beta-D-fructose 6-phosphate + phosphate. It functions in the pathway carbohydrate biosynthesis; gluconeogenesis. This is Fructose-1,6-bisphosphatase class 3 from Staphylococcus aureus (strain USA300).